The sequence spans 440 residues: Sequestosome-1 (440 aa).

Ala2 carries the post-translational modification N-acetylalanine. Positions 2 to 50 (ASLTVKAYLLGKEDAAREIRRFSFCCSPEPEAEAEAAAGPGPCERLLSR) are interaction with LCK. In terms of domain architecture, PB1 spans 3 to 102 (SLTVKAYLLG…DIFRIYIKEK (100 aa)). The residue at position 24 (Ser24) is a Phosphoserine. The interaction with PRKCZ and dimerization stretch occupies residues 43–107 (PCERLLSRVA…YIKEKKECRR (65 aa)). The tract at residues 50-80 (RVAALFPALRPGGFQAHYRDEDGDLVAFSSD) is interaction with PAWR. A Glycyl lysine isopeptide (Lys-Gly) (interchain with G-Cter in ubiquitin) cross-link involves residue Lys91. The segment at 122–224 (VHPNVICDGC…EARPGPTAES (103 aa)) is interaction with GABRR3. A ZZ-type zinc finger spans residues 123 to 173 (HPNVICDGCNGPVVGTRYKCSVCPDYDLCSVCEGKGLHRGHTKLAFPSPFG). Residues Cys128, Cys131, Cys142, and Cys145 each contribute to the Zn(2+) site. Tyr148 is modified (phosphotyrosine). Positions 151, 154, 160, and 163 each coordinate Zn(2+). Ser170 and Ser176 each carry phosphoserine. Residues 170–220 (SPFGHLSEGFSHSRWLRKVKHGHFGWPGWEMGPPGNWSPRPPRAGEARPGP) are LIM protein-binding (LB). Residue Lys189 forms a Glycyl lysine isopeptide (Lys-Gly) (interchain with G-Cter in ubiquitin) linkage. A disordered region spans residues 196 to 235 (PGWEMGPPGNWSPRPPRAGEARPGPTAESASGPSEDPSVN). Phosphoserine is present on residues Ser207, Ser233, Ser249, and Ser266. The TRAF6-binding signature appears at 228 to 233 (PSEDPS). A disordered region spans residues 264-390 (KRSRLTPVSP…ALYPHLPPEA (127 aa)). Thr269 is modified (phosphothreonine). Positions 269-440 (TPVSPESSST…IQYSKHPPPL (172 aa)) are interaction with NTRK1. Residues Ser272 and Ser282 each carry the phosphoserine modification. Low complexity predominate over residues 283-296 (SSQPSSCCSDPSKP). S-palmitoyl cysteine attachment occurs at residues Cys289 and Cys290. Position 306 is a phosphoserine (Ser306). A compositionally biased stretch (basic and acidic residues) spans 310–324 (QMRKIALESEGRPEE). An MAP1LC3B-binding region spans residues 321 to 342 (RPEEQMESDNCSGGDDDWTHLS). 2 positions are modified to phosphoserine: Ser328 and Ser332. The LIR signature appears at 336 to 341 (DDWTHL). Residues 337–347 (DWTHLSSKEVD) are compositionally biased toward basic and acidic residues. The interval 347–352 (DPSTGE) is interaction with KEAP1. Ser349 is subject to Phosphoserine; by ULK1. Positions 351–373 (GELQSLQMPESEGPSSLDPSQEG) are enriched in polar residues. Phosphoserine occurs at positions 355, 361, 365, and 366. The 46-residue stretch at 389–434 (EADPRLIESLSQMLSMGFSDEGGWLTRLLQTKNYDIGAALDTIQYS) folds into the UBA domain. Ser403 is modified (phosphoserine; by CK2, ULK1 and TBK1). Residue Ser407 is modified to Phosphoserine; by ULK1. Lys420 and Lys435 each carry N6-acetyllysine; alternate. Lys420 participates in a covalent cross-link: Glycyl lysine isopeptide (Lys-Gly) (interchain with G-Cter in ubiquitin); alternate. Residue Lys435 forms a Glycyl lysine isopeptide (Lys-Gly) (interchain with G-Cter in SUMO2); alternate linkage.

In terms of assembly, homooligomer or heterooligomer; may form homotypic arrays. Dimerization interferes with ubiquitin binding. Component of a ternary complex with PAWR and PRKCZ. Forms a complex with JUB/Ajuba, PRKCZ and TRAF6. Identified in a complex with TRAF6 and CYLD. Identified in a heterotrimeric complex with ubiquitin and ZFAND5, where ZFAND5 and SQSTM1 both interact with the same ubiquitin molecule. Interacts (via LIR motif) with MAP1LC3A and MAP1LC3B, as well as with other ATG8 family members, including GABARAP, GABARAPL1 and GABARAPL2; these interactions are necessary for the recruitment MAP1 LC3 family members to inclusion bodies containing polyubiquitinated protein aggregates and for their degradation by autophagy. Interacts directly with PRKCI and PRKCZ. Interacts with EBI3, LCK, RASA1, NR2F2, NTRK1, NTRK2, NTRK3, NBR1, MAP2K5 and MAPKAPK5. Upon TNF-alpha stimulation, interacts with RIPK1 probably bridging IKBKB to the TNF-R1 complex composed of TNF-R1/TNFRSF1A, TRADD and RIPK1. Interacts with the proteasome subunits PSMD4 and PSMC2. Interacts with TRAF6. Interacts with 'Lys-63'-linked polyubiquitinated MAPT/TAU. Interacts with FHOD3. Interacts with CYLD. Interacts with SESN1. Interacts with SESN2. Interacts with ULK1. Interacts with UBD. Interacts with WDR81; the interaction is direct and regulates the interaction of SQSTM1 with ubiquitinated proteins. Interacts with WDFY3; this interaction is required to recruit WDFY3 to cytoplasmic bodies and to PML bodies. Interacts with LRRC25. Interacts with STING1; leading to relocalization of STING1 to autophagosomes. Interacts (when phosphorylated at Ser-349) with KEAP1; the interaction is direct and inactivates the BCR(KEAP1) complex by sequestering KEAP1 in inclusion bodies, promoting its degradation. Interacts with MOAP1; promoting dissociation of SQSTM1 inclusion bodies that sequester KEAP1. Interacts with GBP1. Interacts with TAX1BP1. Interacts with (ubiquitinated) PEX5; specifically binds PEX5 ubiquitinated at 'Lys-209' in response to reactive oxygen species (ROS). Interacts (via PB1 domain) with TNS2; the interaction leads to sequestration of TNS2 in cytoplasmic aggregates with SQSTM1 and promotes TNS2 ubiquitination and proteasomal degradation. Interacts with IRS1; the interaction is disrupted by the presence of tensin TNS2. Interacts with TRIM5. Interacts with TRIM11 (when ubiquitinated); promoting AIM2 recruitment to autophagosomes and autophagy-dependent degradation of AIM2. Interacts with TRIM13. Interacts with TRIM16. Interacts with TRIM23. Interacts with TRIM50. Interacts with TRIM55. Interacts with ECSIT; this interaction inhibits TLR4 signaling via functional regulation of the TRAF6-ECSIT complex. Interacts with GABRR1, GABRR2 and GABRR3. Interacts with WDR83. Interacts with GRB2. Interacts with USP12; the interaction is independent of USP12 deubiquitinase activity and may be involved in regulation of autophagic flux. Interacts with ASB6. Post-translationally, phosphorylation at Ser-407 by ULK1 destabilizes the UBA dimer interface and increases binding affinity to ubiquitinated proteins. Phosphorylation at Ser-407 also primes for subsequent phosphorylation at Ser-403. Phosphorylation at Ser-403 by CK2 or ULK1 promotes binding to ubiquitinated proteins by increasing the affinity between the UBA domain and polyubiquitin chains. Phosphorylation at Ser-403 by ULK1 is stimulated by SESN2. Phosphorylated at Ser-403 by TBK1, leading to promote relocalization of 'Lys-63'-linked ubiquitinated STING1 to autophagosomes. Phosphorylation at Ser-349 by ULK1 promotes interaction with KEAP1 and inactivation of the BCR(KEAP1) complex, promoting NFE2L2/NRF2 nuclear accumulation and expression of phase II detoxifying enzymes. Phosphorylated in vitro by TTN. Ubiquitinated by UBE2J1 and RNF26 at Lys-435: ubiquitinated SQSTM1 attracts specific vesicle-associated adapters, forming a molecular bridge that restrains cognate vesicles in the perinuclear region and organizes the endosomal pathway for efficient cargo transport. Ubiquitination by UBE2D2 and UBE2D3 increases its ability to bind polyubiquitin chains by destabilizing the UBA dimer interface. Deubiquitination by USP15 releases target vesicles for fast transport into the cell periphery. Ubiquitinated by the BCR(KEAP1) complex at Lys-420, increasing SQSTM1 sequestering activity and promoting its degradation. Ubiquitinated via 'Lys-29' and 'Lys-33'-linked polyubiquitination leading to xenophagic targeting of bacteria and inhibition of their replication. In terms of processing, acetylated at Lys-420 and Lys-435 by KAT5/TIP60, promotes activity by destabilizing the UBA dimer interface and increases binding affinity to ubiquitinated proteins. Deacetylated by HDAC6. Post-translationally, palmitoylation at Cys-289 and Cys-290 by ZDHHC19 is required for efficient autophagic degradation of SQSTM1-cargo complexes by promoting affinity for ATG8 proteins and recruitment of p62 bodies to autophagosomes. Dealmitoylated at Cys-289 and Cys-290 by LYPLA1. (Microbial infection) Cleaved by S.pyogenes SpeB protease; leading to its degradation. Degradation by SpeB prevents autophagy, promoting to S.pyogenes intracellular replication. In terms of processing, (Microbial infection) Deubiquitinated by Epstein-Barr virus BPLF1; leading to inhibition of the recruitment of MAP1LC3A/LC3 to SQSTM1-positive structures. In terms of tissue distribution, ubiquitously expressed.

The protein localises to the cytoplasmic vesicle. The protein resides in the autophagosome. Its subcellular location is the preautophagosomal structure. It localises to the cytoplasm. It is found in the cytosol. The protein localises to the nucleus. The protein resides in the PML body. Its subcellular location is the late endosome. It localises to the lysosome. It is found in the endoplasmic reticulum. The protein localises to the myofibril. The protein resides in the sarcomere. Molecular adapter required for selective macroautophagy (aggrephagy) by acting as a bridge between polyubiquitinated proteins and autophagosomes. Promotes the recruitment of ubiquitinated cargo proteins to autophagosomes via multiple domains that bridge proteins and organelles in different steps. SQSTM1 first mediates the assembly and removal of ubiquitinated proteins by undergoing liquid-liquid phase separation upon binding to ubiquitinated proteins via its UBA domain, leading to the formation of insoluble cytoplasmic inclusions, known as p62 bodies. SQSTM1 then interacts with ATG8 family proteins on autophagosomes via its LIR motif, leading to p62 body recruitment to autophagosomes, followed by autophagic clearance of ubiquitinated proteins. SQSTM1 is itself degraded along with its ubiquitinated cargos. Also required to recruit ubiquitinated proteins to PML bodies in the nucleus. Also involved in autophagy of peroxisomes (pexophagy) in response to reactive oxygen species (ROS) by acting as a bridge between ubiquitinated PEX5 receptor and autophagosomes. Acts as an activator of the NFE2L2/NRF2 pathway via interaction with KEAP1: interaction inactivates the BCR(KEAP1) complex by sequestering the complex in inclusion bodies, promoting nuclear accumulation of NFE2L2/NRF2 and subsequent expression of cytoprotective genes. Promotes relocalization of 'Lys-63'-linked ubiquitinated STING1 to autophagosomes. Involved in endosome organization by retaining vesicles in the perinuclear cloud: following ubiquitination by RNF26, attracts specific vesicle-associated adapters, forming a molecular bridge that restrains cognate vesicles in the perinuclear region and organizes the endosomal pathway for efficient cargo transport. Sequesters tensin TNS2 into cytoplasmic puncta, promoting TNS2 ubiquitination and proteasomal degradation. May regulate the activation of NFKB1 by TNF-alpha, nerve growth factor (NGF) and interleukin-1. May play a role in titin/TTN downstream signaling in muscle cells. Adapter that mediates the interaction between TRAF6 and CYLD. The polypeptide is Sequestosome-1 (Homo sapiens (Human)).